Reading from the N-terminus, the 446-residue chain is Exodeoxyribonuclease 7 large subunit (446 aa).

It belongs to the XseA family. As to quaternary structure, heterooligomer composed of large and small subunits.

It is found in the cytoplasm. The enzyme catalyses Exonucleolytic cleavage in either 5'- to 3'- or 3'- to 5'-direction to yield nucleoside 5'-phosphates.. Its function is as follows. Bidirectionally degrades single-stranded DNA into large acid-insoluble oligonucleotides, which are then degraded further into small acid-soluble oligonucleotides. In Streptococcus pneumoniae serotype 19F (strain G54), this protein is Exodeoxyribonuclease 7 large subunit.